Reading from the N-terminus, the 299-residue chain is Probable alpha-L-glutamate ligase (299 aa).

Residues 104–287 enclose the ATP-grasp domain; sequence LQLLAREGIE…VSGKIIEFLE (184 aa). Residues Lys-141, 178 to 179, Asp-187, and 211 to 213 each bind ATP; these read EF and RSN. Asp-248, Glu-260, and Asn-262 together coordinate Mg(2+). Mn(2+) is bound by residues Asp-248, Glu-260, and Asn-262.

It belongs to the RimK family. It depends on Mg(2+) as a cofactor. The cofactor is Mn(2+).

This chain is Probable alpha-L-glutamate ligase, found in Trichodesmium erythraeum (strain IMS101).